The following is a 247-amino-acid chain: 3-deoxy-manno-octulosonate cytidylyltransferase (247 aa).

Belongs to the KdsB family.

It localises to the cytoplasm. The enzyme catalyses 3-deoxy-alpha-D-manno-oct-2-ulosonate + CTP = CMP-3-deoxy-beta-D-manno-octulosonate + diphosphate. It functions in the pathway nucleotide-sugar biosynthesis; CMP-3-deoxy-D-manno-octulosonate biosynthesis; CMP-3-deoxy-D-manno-octulosonate from 3-deoxy-D-manno-octulosonate and CTP: step 1/1. Its pathway is bacterial outer membrane biogenesis; lipopolysaccharide biosynthesis. Its function is as follows. Activates KDO (a required 8-carbon sugar) for incorporation into bacterial lipopolysaccharide in Gram-negative bacteria. The sequence is that of 3-deoxy-manno-octulosonate cytidylyltransferase from Chlorobium phaeovibrioides (strain DSM 265 / 1930) (Prosthecochloris vibrioformis (strain DSM 265)).